We begin with the raw amino-acid sequence, 341 residues long: Serpentine receptor class epsilon-12 (341 aa).

The next 7 membrane-spanning stretches (helical) occupy residues 30 to 50, 57 to 77, 101 to 121, 140 to 160, 167 to 187, 230 to 250, and 262 to 282; these read TAFY…LFSA, FTLV…AIIV, AMTF…FSIL, YISY…AILL, IFVV…NQFL, LNFI…SVLF, and ICSL…PQIM.

Belongs to the nematode receptor-like protein sre family.

It localises to the membrane. This Caenorhabditis elegans protein is Serpentine receptor class epsilon-12 (sre-12).